We begin with the raw amino-acid sequence, 200 residues long: NADH-quinone oxidoreductase subunit C (200 aa).

It belongs to the complex I 30 kDa subunit family. NDH-1 is composed of 14 different subunits. Subunits NuoB, C, D, E, F, and G constitute the peripheral sector of the complex.

It is found in the cell inner membrane. It carries out the reaction a quinone + NADH + 5 H(+)(in) = a quinol + NAD(+) + 4 H(+)(out). Its function is as follows. NDH-1 shuttles electrons from NADH, via FMN and iron-sulfur (Fe-S) centers, to quinones in the respiratory chain. The immediate electron acceptor for the enzyme in this species is believed to be ubiquinone. Couples the redox reaction to proton translocation (for every two electrons transferred, four hydrogen ions are translocated across the cytoplasmic membrane), and thus conserves the redox energy in a proton gradient. This is NADH-quinone oxidoreductase subunit C from Burkholderia ambifaria (strain MC40-6).